The chain runs to 23 residues: Basic phospholipase A2 mangshantoxin (23 aa).

Belongs to the phospholipase A2 family. Group II subfamily. Requires Ca(2+) as cofactor. Post-translationally, contains 7 disulfide bonds. In terms of tissue distribution, expressed by the venom gland.

The protein localises to the secreted. The catalysed reaction is a 1,2-diacyl-sn-glycero-3-phosphocholine + H2O = a 1-acyl-sn-glycero-3-phosphocholine + a fatty acid + H(+). Functionally, snake venom phospholipase A2 (PLA2) that displays presynaptic neurotoxicity. PLA2 catalyzes the calcium-dependent hydrolysis of the 2-acyl groups in 3-sn-phosphoglycerides. This chain is Basic phospholipase A2 mangshantoxin, found in Protobothrops mangshanensis (Mangshan pitviper).